A 444-amino-acid polypeptide reads, in one-letter code: Phosphoglucosamine mutase (444 aa).

S100 serves as the catalytic Phosphoserine intermediate. Mg(2+)-binding residues include S100, D240, D242, and D244. At S100 the chain carries Phosphoserine.

The protein belongs to the phosphohexose mutase family. Mg(2+) is required as a cofactor. In terms of processing, activated by phosphorylation.

It catalyses the reaction alpha-D-glucosamine 1-phosphate = D-glucosamine 6-phosphate. Functionally, catalyzes the conversion of glucosamine-6-phosphate to glucosamine-1-phosphate. The protein is Phosphoglucosamine mutase of Moorella thermoacetica (strain ATCC 39073 / JCM 9320).